We begin with the raw amino-acid sequence, 306 residues long: Agmatinase (306 aa).

Mn(2+)-binding residues include His-126, Asp-149, His-151, Asp-153, Asp-230, and Asp-232.

Belongs to the arginase family. Agmatinase subfamily. The cofactor is Mn(2+).

The catalysed reaction is agmatine + H2O = urea + putrescine. It participates in amine and polyamine biosynthesis; putrescine biosynthesis via agmatine pathway; putrescine from agmatine: step 1/1. In terms of biological role, catalyzes the formation of putrescine from agmatine. This chain is Agmatinase, found in Shigella sonnei (strain Ss046).